A 407-amino-acid chain; its full sequence is Multifunctional CCA protein (407 aa).

Residues Gly-8 and Arg-11 each contribute to the ATP site. The CTP site is built by Gly-8 and Arg-11. 2 residues coordinate Mg(2+): Asp-21 and Asp-23. ATP contacts are provided by Arg-91, Arg-137, and Arg-140. Residues Arg-91, Arg-137, and Arg-140 each coordinate CTP. The HD domain occupies 225 to 326 (CGDHVMRVLD…LRLLKDCDAL (102 aa)).

It belongs to the tRNA nucleotidyltransferase/poly(A) polymerase family. Bacterial CCA-adding enzyme type 1 subfamily. As to quaternary structure, monomer. Can also form homodimers and oligomers. Requires Mg(2+) as cofactor. It depends on Ni(2+) as a cofactor.

The catalysed reaction is a tRNA precursor + 2 CTP + ATP = a tRNA with a 3' CCA end + 3 diphosphate. The enzyme catalyses a tRNA with a 3' CCA end + 2 CTP + ATP = a tRNA with a 3' CCACCA end + 3 diphosphate. Catalyzes the addition and repair of the essential 3'-terminal CCA sequence in tRNAs without using a nucleic acid template. Adds these three nucleotides in the order of C, C, and A to the tRNA nucleotide-73, using CTP and ATP as substrates and producing inorganic pyrophosphate. tRNA 3'-terminal CCA addition is required both for tRNA processing and repair. Also involved in tRNA surveillance by mediating tandem CCA addition to generate a CCACCA at the 3' terminus of unstable tRNAs. While stable tRNAs receive only 3'-terminal CCA, unstable tRNAs are marked with CCACCA and rapidly degraded. In Chromobacterium violaceum (strain ATCC 12472 / DSM 30191 / JCM 1249 / CCUG 213 / NBRC 12614 / NCIMB 9131 / NCTC 9757 / MK), this protein is Multifunctional CCA protein.